Reading from the N-terminus, the 561-residue chain is Ankyrin repeat protein OPG189 (561 aa).

7 ANK repeats span residues 68 to 98 (YGENILHIYFIDAANTNIMIFFLDRVLNINK), 172 to 208 (YGCTLLHRCIYNYKKSESESYNELIKILLNNGSDVDK), 212 to 242 (YGNTPFILLCKHDIDNAELFEICLENANIDS), 246 to 275 (NGYTPLHYVSCRNKYDFVKLLISKGANVNA), 279 to 307 (FGTTPFYCGIIHGISLIKLYLESDTELEI), 342 to 371 (YNETSIYDAVSYNAYNTLVYLLNRNGDFET), and 375 to 404 (SGCTCISEAVANNNKIIMDILLSKRPSLKI).

Belongs to the orthopoxvirus OPG189 protein family.

Functionally, contributes to viral release without involving rearrangement of host actin. The sequence is that of Ankyrin repeat protein OPG189 (OPG189) from Cynomys gunnisoni (Gunnison's prairie dog).